A 160-amino-acid polypeptide reads, in one-letter code: Serine-protein kinase RsbW (160 aa).

Belongs to the anti-sigma-factor family.

It carries out the reaction L-seryl-[protein] + ATP = O-phospho-L-seryl-[protein] + ADP + H(+). The enzyme catalyses L-threonyl-[protein] + ATP = O-phospho-L-threonyl-[protein] + ADP + H(+). Negative regulator of sigma-B activity. Phosphorylates and inactivates its specific antagonist protein, RsbV. Upon phosphorylation of RsbV, RsbW is released and binds to sigma-B, thereby blocking its ability to form an RNA polymerase holoenzyme (E-sigma-B). This Bacillus velezensis (strain DSM 23117 / BGSC 10A6 / LMG 26770 / FZB42) (Bacillus amyloliquefaciens subsp. plantarum) protein is Serine-protein kinase RsbW.